A 156-amino-acid chain; its full sequence is Cell division protein SepF (156 aa).

The span at 20–36 shows a compositional bias: basic and acidic residues; sequence AQYGYEKEQTDMKKQQD. Residues 20-50 are disordered; it reads AQYGYEKEQTDMKKQQDPPEQQDVTFPKAQP.

The protein belongs to the SepF family. In terms of assembly, homodimer. Interacts with FtsZ.

The protein resides in the cytoplasm. Cell division protein that is part of the divisome complex and is recruited early to the Z-ring. Probably stimulates Z-ring formation, perhaps through the cross-linking of FtsZ protofilaments. Its function overlaps with FtsA. The protein is Cell division protein SepF of Bacillus cereus (strain G9842).